Reading from the N-terminus, the 328-residue chain is MTSTKQHKKVILVGDGAVGSSYAFALVNQGIAQELGIIEIPQLHEKAVGDALDLSHALAFTSPKKIYAAQYSDCADADLVVITAGAPQKPGETRLDLVGKNLAINKSIVTQVVESGFKGIFLVAANPVDVLTYSTWKFSGFPKERVIGSGTSLDSARFRQALAEKLDVDARSVHAYIMGEHGDSEFAVWSHANIAGVNLEEFLKDTQNVQEAELIELFEGVRDAAYTIINKKGATYYGIAVALARITKAILDDENAVLPLSVFQEGQYGVENVFIGQPAVVGAHGIVRPVNIPLNDAETQKMQASAKELQAIIDEAWKNPEFQEASKN.

Residues Val-18, Glu-39, Lys-46, Tyr-71, and 85–86 each bind NAD(+); that span reads GA. 2 residues coordinate substrate: Gln-88 and Arg-94. Residues Ser-107, 124–126, and Ser-149 contribute to the NAD(+) site; that span reads AAN. Position 126–129 (126–129) interacts with substrate; that stretch reads NPVD. 154–157 provides a ligand contact to substrate; that stretch reads DSAR. Beta-D-fructose 1,6-bisphosphate contacts are provided by Arg-159 and His-174. Catalysis depends on His-181, which acts as the Proton acceptor. Residue Tyr-226 is modified to Phosphotyrosine. Residue Thr-235 coordinates substrate.

The protein belongs to the LDH/MDH superfamily. LDH family. Homotetramer.

The protein resides in the cytoplasm. The enzyme catalyses (S)-lactate + NAD(+) = pyruvate + NADH + H(+). It participates in fermentation; pyruvate fermentation to lactate; (S)-lactate from pyruvate: step 1/1. With respect to regulation, allosterically activated by fructose 1,6-bisphosphate (FBP). Functionally, catalyzes the conversion of lactate to pyruvate. This chain is L-lactate dehydrogenase, found in Streptococcus pneumoniae (strain ATCC BAA-255 / R6).